Here is a 396-residue protein sequence, read N- to C-terminus: Interactor of constitutive active ROPs 5 (396 aa).

Disordered regions lie at residues 1-49 (MQTP…TQIP) and 99-122 (ALKR…NASE). Coiled-coil stretches lie at residues 67-124 (KKRT…SEDS) and 158-366 (LSSA…TAAS). A compositionally biased stretch (basic and acidic residues) spans 99 to 115 (ALKREAQEEAEDAKHQL).

Belongs to the ICR family. In terms of assembly, component of the active ARAC10-IRC5-KIN13A complex. Homooligomer. Interacts (via C-terminus) with ARAC4, ARAC10, ARAC11 and (via N-terminus) with KIN13A (via C-terminus), but no interactions with SEC3A. As to expression, expressed in xylem cells in the roots and in stamens, petals and pollen.

It localises to the cell membrane. It is found in the cytoplasm. Its subcellular location is the cytoskeleton. Functionally, ROP effector binding specifically activated ROPs and linking them to the microtubule cytoskeleton. Involved in ROP-regulated polar growth. Involved in local disassembly of cortical microtubules when associated with ARAC10 and KIN13A and conversely also mediates the elimination of ARAC10 from the plasma membrane by the cortical microtubules. Accumulates at the plus end of shrinking microtubules. Targets KIN13A to microtubules. This Arabidopsis thaliana (Mouse-ear cress) protein is Interactor of constitutive active ROPs 5 (ICR5).